A 159-amino-acid polypeptide reads, in one-letter code: Na(+)/H(+) antiporter subunit E1 (159 aa).

A run of 4 helical transmembrane segments spans residues 1 to 21, 27 to 47, 49 to 69, and 101 to 121; these read MAVQ…VTNS, FVLG…VLPG, FYVI…IELI, and WQIV…VLGV.

This sequence belongs to the CPA3 antiporters (TC 2.A.63) subunit E family. May form a heterooligomeric complex that consists of seven subunits: mnhA1, mnhB1, mnhC1, mnhD1, mnhE1, mnhF1 and mnhG1.

It is found in the cell membrane. Functionally, mnh complex is a Na(+)/H(+) antiporter involved in Na(+) excretion. The protein is Na(+)/H(+) antiporter subunit E1 (mnhE1) of Staphylococcus aureus (strain Mu3 / ATCC 700698).